Consider the following 296-residue polypeptide: Phosphatidylglycerol--prolipoprotein diacylglyceryl transferase (296 aa).

4 consecutive transmembrane segments (helical) span residues 10–30 (IAFSLGPVQVHWYGLMYLAAF), 57–77 (LLFYGMLGVVLGGRIGYMLFY), 92–112 (VWEGGMSFHGGLLGVLIACWL), and 119–139 (LHFFDVMDFVAPLVPLGLGFG). Residue R140 participates in a 1,2-diacyl-sn-glycero-3-phospho-(1'-sn-glycerol) binding. Helical transmembrane passes span 194 to 214 (QLYEAALEGVVMFVVLWTFSM), 220 to 240 (YAVSGLFALLYGVFRFIVEFV), and 254 to 274 (WLTMGQILSLPLVAVGLVLLA).

It belongs to the Lgt family.

Its subcellular location is the cell inner membrane. The catalysed reaction is L-cysteinyl-[prolipoprotein] + a 1,2-diacyl-sn-glycero-3-phospho-(1'-sn-glycerol) = an S-1,2-diacyl-sn-glyceryl-L-cysteinyl-[prolipoprotein] + sn-glycerol 1-phosphate + H(+). It functions in the pathway protein modification; lipoprotein biosynthesis (diacylglyceryl transfer). Its function is as follows. Catalyzes the transfer of the diacylglyceryl group from phosphatidylglycerol to the sulfhydryl group of the N-terminal cysteine of a prolipoprotein, the first step in the formation of mature lipoproteins. This is Phosphatidylglycerol--prolipoprotein diacylglyceryl transferase from Xanthomonas axonopodis pv. citri (strain 306).